Here is a 388-residue protein sequence, read N- to C-terminus: Omega-hydroxy-beta-dihydromenaquinone-9 sulfotransferase Stf3 (388 aa).

It belongs to the Stf3 family.

It carries out the reaction omega-hydroxy-beta-dihydromenaquinone-9 + 3'-phosphoadenylyl sulfate = omega-sulfo-beta-dihydromenaquinone-9 + adenosine 3',5'-bisphosphate + H(+). Functionally, involved in the biosynthesis of sulfomenaquinone (SMK, initially named S881 on the basis of its mass), which is localized in the outer envelope of M.bovis and negatively regulates its virulence. Catalyzes the transfer of a sulfonate group from 3'-phosphoadenosine-5'-phosphosulfate (PAPS) to omega-hydroxy-beta-dihydromenaquinone-9, generating omega-sulfo-beta-dihydromenaquinone-9 (sulfomenaquinone). This Mycobacterium bovis (strain ATCC BAA-935 / AF2122/97) protein is Omega-hydroxy-beta-dihydromenaquinone-9 sulfotransferase Stf3.